A 1429-amino-acid polypeptide reads, in one-letter code: uncharacterized protein (1429 aa).

Disordered stretches follow at residues 1–76 (MEGE…SGIE) and 103–130 (PAGA…AGEK). Positions 14–29 (SHSTSVVSERASSSGV) are enriched in low complexity. The segment covering 109–121 (SAQNANLISSKSE) has biased composition (polar residues). 2 helical membrane-spanning segments follow: residues 197–217 (LTGQ…LSWI) and 225–245 (FFIL…CMIS). One can recognise an SMP-LTD domain in the interval 266–471 (DYETMSWFNT…WPNMFDYDLS (206 aa)). C2 domains follow at residues 462-584 (WPNM…GDIY) and 738-858 (TPVD…DRSA). The interval 899 to 932 (NTDNSSKQSSENVQSATDPTTPAKDNSTSNAETS) is disordered. The C2 3 domain maps to 1060–1177 (TYMPVPMTLN…EPNVESQQSI (118 aa)). The tract at residues 1280–1303 (EKNPSRSDLTTTQEASSSASVPPA) is disordered. Over residues 1294–1303 (ASSSASVPPA) the composition is skewed to low complexity.

The protein resides in the membrane. This is an uncharacterized protein from Schizosaccharomyces pombe (strain 972 / ATCC 24843) (Fission yeast).